The primary structure comprises 435 residues: Eukaryotic translation initiation factor 3 subunit E (435 aa).

The region spanning phenylalanine 219–leucine 392 is the PCI domain.

Belongs to the eIF-3 subunit E family. As to quaternary structure, component of the eukaryotic translation initiation factor 3 (eIF-3) complex.

It localises to the cytoplasm. Its function is as follows. Component of the eukaryotic translation initiation factor 3 (eIF-3) complex, which is involved in protein synthesis of a specialized repertoire of mRNAs and, together with other initiation factors, stimulates binding of mRNA and methionyl-tRNAi to the 40S ribosome. The eIF-3 complex specifically targets and initiates translation of a subset of mRNAs involved in cell proliferation. This chain is Eukaryotic translation initiation factor 3 subunit E (eIF3-S6), found in Aedes aegypti (Yellowfever mosquito).